The chain runs to 1035 residues: Tyrosine-protein kinase-like otk (1035 aa).

An N-terminal signal peptide occupies residues 1–23 (MDMDVMMISMCILASTLMAPGWA). Ig-like C2-type domains lie at 24–109 (STSG…REAS), 110–199 (PPAK…RVMS), 251–365 (PEDL…APLN), 368–464 (PGLL…VSIN), and 469–559 (PKFS…VQLV). Topologically, residues 24–582 (STSGFLRVPQ…GGDGFLVTRA (559 aa)) are extracellular. 5 disulfide bridges follow: Cys47–Cys96, Cys138–Cys188, Cys276–Cys354, Cys399–Cys448, and Cys491–Cys543. N-linked (GlcNAc...) asparagine glycans are attached at residues Asn336, Asn418, Asn430, Asn445, Asn513, and Asn525. A helical membrane pass occupies residues 583–603 (VLITMTVALAYIVLVVGLMLW). Over 604–1035 (CRYRRQARKA…SKAMQSVAEK (432 aa)) the chain is Cytoplasmic. 2 disordered regions span residues 623–683 (AGGD…KSVY) and 721–775 (AQSD…KEEE). Residues 658 to 676 (KSNGDAQKSDDTACSQQSR) are compositionally biased toward polar residues. At Ser681 the chain carries Phosphoserine. Residues 693-1029 (LSELLQIGRG…QLGSALSKAM (337 aa)) form the Protein kinase; inactive domain. A compositionally biased stretch (basic and acidic residues) spans 723–734 (SDKDADTEKQHS). The span at 766 to 775 (DDIEEIKEEE) shows a compositional bias: acidic residues.

The protein belongs to the protein kinase superfamily. Tyr protein kinase family. Insulin receptor subfamily. Interacts with plexA; component of a receptor complex that mediates the repulsive signaling in response to Semaphorin ligands.

It localises to the cell membrane. Functionally, acts as a calcium-dependent, homophilic cell adhesion molecule that regulates neural recognition during the development of the nervous system. Component of the repulsive Plexin signaling response to regulate motor axon guidance at the embryonic stage. Also component of a receptor complex that is required in the adult visual system to innervate the lamina layer; specific targeting of R1-R6 axons. This chain is Tyrosine-protein kinase-like otk, found in Drosophila persimilis (Fruit fly).